Reading from the N-terminus, the 87-residue chain is Small ribosomal subunit protein bS20 (87 aa).

Residues 1 to 26 (MANIKSAKKRAVQSEKARKHNASRRS) form a disordered region.

The protein belongs to the bacterial ribosomal protein bS20 family.

Binds directly to 16S ribosomal RNA. In Klebsiella pneumoniae (strain 342), this protein is Small ribosomal subunit protein bS20.